A 599-amino-acid polypeptide reads, in one-letter code: Sulfite reductase [NADPH] flavoprotein alpha-component (599 aa).

The Flavodoxin-like domain maps to 64 to 202 (ITIISASQTG…AASEWRARVV (139 aa)). FMN is bound by residues 70–75 (SQTGNA), 117–120 (STQG), and 153–162 (LGDSSYEFFC). Residues 234–448 (DAPLAASLSV…IEHNDNFRLP (215 aa)) enclose the FAD-binding FR-type domain. Residues Thr322, Ala356, 386 to 389 (RLYS), 404 to 406 (TVG), Tyr410, and 419 to 422 (GGAS) each bind FAD. Residues 519–520 (SR), 525–529 (KIYVQ), and Asp561 each bind NADP(+). Tyr599 is an FAD binding site.

Belongs to the NADPH-dependent sulphite reductase flavoprotein subunit CysJ family. The protein in the N-terminal section; belongs to the flavodoxin family. This sequence in the C-terminal section; belongs to the flavoprotein pyridine nucleotide cytochrome reductase family. Alpha(8)-beta(8). The alpha component is a flavoprotein, the beta component is a hemoprotein. Requires FAD as cofactor. FMN is required as a cofactor.

The catalysed reaction is hydrogen sulfide + 3 NADP(+) + 3 H2O = sulfite + 3 NADPH + 4 H(+). It participates in sulfur metabolism; hydrogen sulfide biosynthesis; hydrogen sulfide from sulfite (NADPH route): step 1/1. In terms of biological role, component of the sulfite reductase complex that catalyzes the 6-electron reduction of sulfite to sulfide. This is one of several activities required for the biosynthesis of L-cysteine from sulfate. The flavoprotein component catalyzes the electron flow from NADPH -&gt; FAD -&gt; FMN to the hemoprotein component. This chain is Sulfite reductase [NADPH] flavoprotein alpha-component, found in Escherichia coli O6:K15:H31 (strain 536 / UPEC).